Reading from the N-terminus, the 362-residue chain is Phosphoserine aminotransferase (362 aa).

Residue Arg-43 participates in L-glutamate binding. Residues 77–78 (AR), Trp-103, Thr-153, Asp-173, and Gln-196 each bind pyridoxal 5'-phosphate. Residue Lys-197 is modified to N6-(pyridoxal phosphate)lysine.

Belongs to the class-V pyridoxal-phosphate-dependent aminotransferase family. SerC subfamily. In terms of assembly, homodimer. It depends on pyridoxal 5'-phosphate as a cofactor.

The protein localises to the cytoplasm. It catalyses the reaction O-phospho-L-serine + 2-oxoglutarate = 3-phosphooxypyruvate + L-glutamate. The enzyme catalyses 4-(phosphooxy)-L-threonine + 2-oxoglutarate = (R)-3-hydroxy-2-oxo-4-phosphooxybutanoate + L-glutamate. It participates in amino-acid biosynthesis; L-serine biosynthesis; L-serine from 3-phospho-D-glycerate: step 2/3. Its pathway is cofactor biosynthesis; pyridoxine 5'-phosphate biosynthesis; pyridoxine 5'-phosphate from D-erythrose 4-phosphate: step 3/5. Catalyzes the reversible conversion of 3-phosphohydroxypyruvate to phosphoserine and of 3-hydroxy-2-oxo-4-phosphonooxybutanoate to phosphohydroxythreonine. The protein is Phosphoserine aminotransferase of Legionella pneumophila subsp. pneumophila (strain Philadelphia 1 / ATCC 33152 / DSM 7513).